The chain runs to 155 residues: Peptide deformylase (155 aa).

Residues C88 and H130 each contribute to the Fe cation site. E131 is a catalytic residue. A Fe cation-binding site is contributed by H134.

The protein belongs to the polypeptide deformylase family. Fe(2+) serves as cofactor.

The enzyme catalyses N-terminal N-formyl-L-methionyl-[peptide] + H2O = N-terminal L-methionyl-[peptide] + formate. Removes the formyl group from the N-terminal Met of newly synthesized proteins. Requires at least a dipeptide for an efficient rate of reaction. N-terminal L-methionine is a prerequisite for activity but the enzyme has broad specificity at other positions. The chain is Peptide deformylase from Pelotomaculum thermopropionicum (strain DSM 13744 / JCM 10971 / SI).